The primary structure comprises 1215 residues: Pesticidal crystal protein Cry1Ka (1215 aa).

The protein belongs to the delta endotoxin family.

Promotes colloidosmotic lysis by binding to the midgut epithelial cells of insects. Selectively toxic to Artogeia rapae but not active on Plutella xylostella. The polypeptide is Pesticidal crystal protein Cry1Ka (cry1Ka) (Bacillus thuringiensis subsp. morrisoni).